Here is a 799-residue protein sequence, read N- to C-terminus: MANILKKIYDNDRRELKKFEKLATKVESLGDEYEKLSDEQLQAKTPEFRKRLKNGETLDDILPEAFATAREGAKRVLGLYPFRVQIIGGIALHYGNIAEMMTGEGKTLTATLPVYLNALTGKGVHVVTVNEYLSSRDESEMGQLYKWLGLSVGLNLNSMSADEKRDAYNCDVTYSTNSELGFDYLRDNMVVYKDQMVQRPLNYAIIDEVDSILIDEARTPLIISGQAEQANSEYIRADRFVKTLVEDKSDDDVDDDEDHGDYKIDWPTKTINLTNQGIKKACEHFGLKNLYDIDNQVLVHHIDQALRANYIMLKDIDYVVQNGEVMIVDSFTGRVMEGRRYSDGLHQAIEAKEGVKIQEESKTQATITYQNFFRMYKKLAGMTGTAKTEEEEFREIYNMEVITIPTNRPIARKDLPDILYPTLDSKFEAVVKEIKERHAKGQPVLVGTVAIESSERLSQMLNQAGIPHAVLNAKNHAKEAEIIMNAGQRGAVTIATNMAGRGTDIKLGPGVKELGGLAVIGTERHESRRIDNQLRGRSGRQGDPGVTRFYLSLEDDLMKRFGGDRVKLFLDRISDNDDDKVIESRMITKQVESAQKRVEGNNYDTRKQTLQYDDVMRTQREIIYGERMQVISEDKSLKPVLMPMIKRTIDHQIDMYTQGDKKDWRNDQIRDFISSAITDEETTKKLNMKHLSAEELKKRLYQIAEDNYAEKEKQLADPEQMLEFEKVVILRVVDERWTDHIDAMDQLRQSISLRGYGQLNPLVEYQESGYRMFEEMISNIEFDATRLFMKAQIRQNISR.

Residues Gln-85, 103 to 107 (GEGKT), and Asp-504 each bind ATP.

This sequence belongs to the SecA family. Monomer and homodimer. Part of the essential Sec protein translocation apparatus which comprises SecA, SecYEG and auxiliary proteins SecDF. Other proteins may also be involved.

It localises to the cell membrane. Its subcellular location is the cytoplasm. It catalyses the reaction ATP + H2O + cellular proteinSide 1 = ADP + phosphate + cellular proteinSide 2.. In terms of biological role, part of the Sec protein translocase complex. Interacts with the SecYEG preprotein conducting channel. Has a central role in coupling the hydrolysis of ATP to the transfer of proteins into and across the cell membrane, serving as an ATP-driven molecular motor driving the stepwise translocation of polypeptide chains across the membrane. The protein is Protein translocase subunit SecA 1 of Lactobacillus johnsonii (strain CNCM I-12250 / La1 / NCC 533).